The primary structure comprises 438 residues: Diaminopimelate decarboxylase (438 aa).

Position 73 is an N6-(pyridoxal phosphate)lysine (Lys73). Residues Ser217, Gly254, and 294 to 297 (EPGR) contribute to the pyridoxal 5'-phosphate site. Arg297, Arg333, and Tyr337 together coordinate substrate. Cys362 acts as the Proton donor in catalysis. Positions 363 and 391 each coordinate substrate. Tyr391 is a binding site for pyridoxal 5'-phosphate.

It belongs to the Orn/Lys/Arg decarboxylase class-II family. LysA subfamily. Homodimer. Pyridoxal 5'-phosphate is required as a cofactor.

The catalysed reaction is meso-2,6-diaminopimelate + H(+) = L-lysine + CO2. The protein operates within amino-acid biosynthesis; L-lysine biosynthesis via DAP pathway; L-lysine from DL-2,6-diaminopimelate: step 1/1. Competitively inhibited by the substrate analog azelaic acid in vitro but not in vivo. In terms of biological role, specifically catalyzes the decarboxylation of meso-diaminopimelate (meso-DAP) to L-lysine. The chain is Diaminopimelate decarboxylase from Methanocaldococcus jannaschii (strain ATCC 43067 / DSM 2661 / JAL-1 / JCM 10045 / NBRC 100440) (Methanococcus jannaschii).